The following is a 309-amino-acid chain: Pseudouridine-5'-phosphate glycosidase 2 (309 aa).

Catalysis depends on E26, which acts as the Proton donor. The substrate site is built by K87 and V107. Position 139 (D139) interacts with Mn(2+). 141–143 is a binding site for substrate; the sequence is SAD. The Nucleophile role is filled by K160.

The protein belongs to the pseudouridine-5'-phosphate glycosidase family. Homotrimer. The cofactor is Mn(2+).

It catalyses the reaction D-ribose 5-phosphate + uracil = psi-UMP + H2O. In terms of biological role, catalyzes the reversible cleavage of pseudouridine 5'-phosphate (PsiMP) to ribose 5-phosphate and uracil. Functions biologically in the cleavage direction, as part of a pseudouridine degradation pathway. The chain is Pseudouridine-5'-phosphate glycosidase 2 from Rhizobium johnstonii (strain DSM 114642 / LMG 32736 / 3841) (Rhizobium leguminosarum bv. viciae).